A 247-amino-acid polypeptide reads, in one-letter code: Eukaryotic translation initiation factor 3 subunit J (247 aa).

Disordered regions lie at residues 1–64 (MADW…KTLK) and 77–101 (EEKR…EEQM). A compositionally biased stretch (acidic residues) spans 24–45 (EGEDEDDDIKESWDDDDEDEKK). Residues 43–108 (EKKEDEAKNT…EQMAEKLRRQ (66 aa)) are a coiled coil.

Belongs to the eIF-3 subunit J family. As to quaternary structure, component of the eukaryotic translation initiation factor 3 (eIF-3) complex.

It is found in the cytoplasm. Component of the eukaryotic translation initiation factor 3 (eIF-3) complex, which is involved in protein synthesis of a specialized repertoire of mRNAs and, together with other initiation factors, stimulates binding of mRNA and methionyl-tRNAi to the 40S ribosome. The eIF-3 complex specifically targets and initiates translation of a subset of mRNAs involved in cell proliferation. This chain is Eukaryotic translation initiation factor 3 subunit J, found in Nematostella vectensis (Starlet sea anemone).